A 335-amino-acid polypeptide reads, in one-letter code: tRNA-dihydrouridine(20/20a) synthase (335 aa).

FMN contacts are provided by residues 19–21 and Gln72; that span reads PMM. Cys102 serves as the catalytic Proton donor. FMN-binding positions include Lys141, His173, 213 to 215, and 235 to 236; these read NGG and GR.

It belongs to the Dus family. DusA subfamily. FMN serves as cofactor.

The catalysed reaction is 5,6-dihydrouridine(20) in tRNA + NADP(+) = uridine(20) in tRNA + NADPH + H(+). It carries out the reaction 5,6-dihydrouridine(20) in tRNA + NAD(+) = uridine(20) in tRNA + NADH + H(+). The enzyme catalyses 5,6-dihydrouridine(20a) in tRNA + NADP(+) = uridine(20a) in tRNA + NADPH + H(+). It catalyses the reaction 5,6-dihydrouridine(20a) in tRNA + NAD(+) = uridine(20a) in tRNA + NADH + H(+). In terms of biological role, catalyzes the synthesis of 5,6-dihydrouridine (D), a modified base found in the D-loop of most tRNAs, via the reduction of the C5-C6 double bond in target uridines. Specifically modifies U20 and U20a in tRNAs. The sequence is that of tRNA-dihydrouridine(20/20a) synthase from Xanthomonas campestris pv. campestris (strain ATCC 33913 / DSM 3586 / NCPPB 528 / LMG 568 / P 25).